The primary structure comprises 737 residues: Protein bicaudal D homolog (737 aa).

Coiled-coil stretches lie at residues 1 to 255 (MAES…RNAE), 292 to 319 (GSSD…EKIF), and 547 to 684 (AENE…DRDR). The disordered stretch occupies residues 72–97 (YRSQHQRSTRSELENEESLLEESSAK). Positions 686-737 (VFKRSSTRAPTRETYQPPRAVRYPGSTTTAQQPAPSSSGGSRGGPRRGDNQQ) are disordered. Polar residues predominate over residues 710 to 719 (GSTTTAQQPA).

This sequence belongs to the BicD family. Component of a dynein-regulating complex composed of at least bicd-1, dlc-1 and egal-1. Interacts with egal-1 and unc-83. As to expression, expressed in the excretory cell, body wall muscles, vulval muscle cells, PVD and FLP sensory neurons and AVF interneurons.

The protein localises to the nucleus envelope. Its subcellular location is the perikaryon. The protein resides in the cell projection. It localises to the dendrite. Part of a complex with dlc-1 and egal-1, which is recruited to the nuclear envelope by unc-83, where in turn, it recruits dynein to the nuclear surface and regulates nuclear migration in hypodermal precursor cells. Required for the formation of dendritic branches of PVD sensory neurons. The chain is Protein bicaudal D homolog from Caenorhabditis elegans.